An 88-amino-acid chain; its full sequence is Phosphocarrier protein HPr (88 aa).

Residues 1–88 (MASKEFHIVV…ETMTKEGLAE (88 aa)) enclose the HPr domain. His-15 functions as the Pros-phosphohistidine intermediate in the catalytic mechanism. At Ser-46 the chain carries Phosphoserine; by HPrK/P.

Belongs to the HPr family.

It localises to the cytoplasm. With respect to regulation, phosphorylation on Ser-46 inhibits the phosphoryl transfer from enzyme I to HPr. Its function is as follows. General (non sugar-specific) component of the phosphoenolpyruvate-dependent sugar phosphotransferase system (sugar PTS). This major carbohydrate active-transport system catalyzes the phosphorylation of incoming sugar substrates concomitantly with their translocation across the cell membrane. The phosphoryl group from phosphoenolpyruvate (PEP) is transferred to the phosphoryl carrier protein HPr by enzyme I. Phospho-HPr then transfers it to the PTS EIIA domain. P-Ser-HPr interacts with the catabolite control protein A (CcpA), forming a complex that binds to DNA at the catabolite response elements cre, operator sites preceding a large number of catabolite-regulated genes. Thus, P-Ser-HPr is a corepressor in carbon catabolite repression (CCR), a mechanism that allows bacteria to coordinate and optimize the utilization of available carbon sources. P-Ser-HPr also plays a role in inducer exclusion, in which it probably interacts with several non-PTS permeases and inhibits their transport activity. The chain is Phosphocarrier protein HPr (ptsH) from Lactococcus lactis subsp. lactis (strain IL1403) (Streptococcus lactis).